A 194-amino-acid chain; its full sequence is ATP-dependent Clp protease proteolytic subunit 3 (194 aa).

The active-site Nucleophile is the S96. Residue H121 is part of the active site.

It belongs to the peptidase S14 family. Fourteen ClpP subunits assemble into 2 heptameric rings which stack back to back to give a disk-like structure with a central cavity, resembling the structure of eukaryotic proteasomes.

It is found in the cytoplasm. The enzyme catalyses Hydrolysis of proteins to small peptides in the presence of ATP and magnesium. alpha-casein is the usual test substrate. In the absence of ATP, only oligopeptides shorter than five residues are hydrolyzed (such as succinyl-Leu-Tyr-|-NHMec, and Leu-Tyr-Leu-|-Tyr-Trp, in which cleavage of the -Tyr-|-Leu- and -Tyr-|-Trp bonds also occurs).. Functionally, cleaves peptides in various proteins in a process that requires ATP hydrolysis. Has a chymotrypsin-like activity. Plays a major role in the degradation of misfolded proteins. The chain is ATP-dependent Clp protease proteolytic subunit 3 from Rhizobium johnstonii (strain DSM 114642 / LMG 32736 / 3841) (Rhizobium leguminosarum bv. viciae).